Reading from the N-terminus, the 1486-residue chain is Chromosome partition protein MukB (1486 aa).

34-41 is an ATP binding site; the sequence is GGNGAGKS. 3 coiled-coil regions span residues 326–418, 444–480, and 509–603; these read LEAD…QYNQ, LETF…QAYQ, and RHLA…RAPV. The interval 666–783 is flexible hinge; that stretch reads PGGSEDQRLN…EVPLFGRAAR (118 aa). Coiled coils occupy residues 835–923, 977–1115, and 1209–1266; these read EAEI…AKLE, EMLS…TAKA, and VEAI…QNVS.

Belongs to the SMC family. MukB subfamily. In terms of assembly, homodimerization via its hinge domain. Binds to DNA via its C-terminal region. Interacts, and probably forms a ternary complex, with MukE and MukF via its C-terminal region. The complex formation is stimulated by calcium or magnesium. Interacts with tubulin-related protein FtsZ.

The protein resides in the cytoplasm. Its subcellular location is the nucleoid. Its function is as follows. Plays a central role in chromosome condensation, segregation and cell cycle progression. Functions as a homodimer, which is essential for chromosome partition. Involved in negative DNA supercoiling in vivo, and by this means organize and compact chromosomes. May achieve or facilitate chromosome segregation by condensation DNA from both sides of a centrally located replisome during cell division. The protein is Chromosome partition protein MukB of Shigella flexneri serotype 5b (strain 8401).